The chain runs to 378 residues: Neutral protease 2 homolog ARB_04336 (378 aa).

The first 19 residues, 1–19 (MKFFTALAAVGALLAPAVA), serve as a signal peptide directing secretion. Residues 20-186 (LPTPASEASH…DYFSKGLDKR (167 aa)) constitute a propeptide that is removed on maturation. 2 disulfide bridges follow: C192–C262 and C269–C287. H311 contributes to the Zn(2+) binding site. E312 is a catalytic residue. The Zn(2+) site is built by H315 and D326.

Belongs to the peptidase M35 family. Requires Zn(2+) as cofactor.

It is found in the secreted. The enzyme catalyses Preferential cleavage of bonds with hydrophobic residues in P1'. Also 3-Asn-|-Gln-4 and 8-Gly-|-Ser-9 bonds in insulin B chain.. In terms of biological role, secreted metalloproteinase that allows assimilation of proteinaceous substrates. Shows high activities on basic nuclear substrates such as histone and protamine. May be involved in virulence. This chain is Neutral protease 2 homolog ARB_04336, found in Arthroderma benhamiae (strain ATCC MYA-4681 / CBS 112371) (Trichophyton mentagrophytes).